We begin with the raw amino-acid sequence, 202 residues long: Small ribosomal subunit protein uS4c (202 aa).

One can recognise an S4 RNA-binding domain in the interval 90-153 (MRLDNVTFRL…KSETIISKNI (64 aa)).

Belongs to the universal ribosomal protein uS4 family. As to quaternary structure, part of the 30S ribosomal subunit. Contacts protein S5. The interaction surface between S4 and S5 is involved in control of translational fidelity.

The protein resides in the plastid. Its subcellular location is the chloroplast. Its function is as follows. One of the primary rRNA binding proteins, it binds directly to 16S rRNA where it nucleates assembly of the body of the 30S subunit. In terms of biological role, with S5 and S12 plays an important role in translational accuracy. The protein is Small ribosomal subunit protein uS4c (rps4) of Hypnum cupressiforme (Cypress-leaved plait-moss).